The chain runs to 71 residues: Phosphatidylinositol N-acetylglucosaminyltransferase subunit Y (71 aa).

Residue Met1 is a topological domain, cytoplasmic. The chain crosses the membrane as a helical span at residues 2–21 (FFSLPVLTVLIPLVSLTGLL). Over 22-44 (YSASVEEDFPNGCTSTASLCFYS) the chain is Lumenal. The chain crosses the membrane as a helical span at residues 45-65 (LLLPITLPVYVFFHLWTWMGL). The Cytoplasmic portion of the chain corresponds to 66–71 (KLFRHN).

As to quaternary structure, component of the glycosylphosphatidylinositol-N-acetylglucosaminyltransferase (GPI-GnT) complex composed at least by PIGA, PIGC, PIGH, PIGP, PIGQ, PIGY and DPM2.

The protein localises to the endoplasmic reticulum membrane. Its pathway is glycolipid biosynthesis; glycosylphosphatidylinositol-anchor biosynthesis. In terms of biological role, part of the glycosylphosphatidylinositol-N-acetylglucosaminyltransferase (GPI-GnT) complex that catalyzes the transfer of N-acetylglucosamine from UDP-N-acetylglucosamine to phosphatidylinositol and participates in the first step of GPI biosynthesis. May act by regulating the catalytic subunit PIGA. The sequence is that of Phosphatidylinositol N-acetylglucosaminyltransferase subunit Y from Xenopus tropicalis (Western clawed frog).